The following is a 299-amino-acid chain: Mitochondrial 2-oxodicarboxylate carrier (299 aa).

Solcar repeat units follow at residues 11 to 100 (REAS…YKKL), 107 to 196 (SPAL…VKNM), and 205 to 294 (LEFW…TYSW). 6 helical membrane passes run 17 to 37 (IVAG…LDVV), 70 to 89 (FGFY…KRAV), 113 to 133 (AIAG…FEVV), 167 to 187 (GLNK…MVYF), 205 to 225 (LEFW…SVIN), and 277 to 297 (LGPG…WLQE).

It belongs to the mitochondrial carrier (TC 2.A.29) family. Expressed in placenta, gall bladder and colon.

The protein localises to the mitochondrion inner membrane. The enzyme catalyses 2-oxoadipate(in) + 2-oxoglutarate(out) = 2-oxoadipate(out) + 2-oxoglutarate(in). It carries out the reaction hexanedioate(in) + 2-oxoglutarate(out) = hexanedioate(out) + 2-oxoglutarate(in). The catalysed reaction is L-2-aminoadipate(in) + 2-oxoglutarate(out) = L-2-aminoadipate(out) + 2-oxoglutarate(in). It catalyses the reaction glutarate(in) + 2-oxoglutarate(out) = glutarate(out) + 2-oxoglutarate(in). The enzyme catalyses 2-oxoheptanedioate(in) + 2-oxoglutarate(out) = 2-oxoheptanedioate(out) + 2-oxoglutarate(in). It carries out the reaction heptanedioate(in) + 2-oxoglutarate(out) = heptanedioate(out) + 2-oxoglutarate(in). The catalysed reaction is citrate(in) + 2-oxoglutarate(out) = citrate(out) + 2-oxoglutarate(in). Transports dicarboxylates across the inner membranes of mitochondria by a counter-exchange mechanism. Can transport 2-oxoadipate (2-oxohexanedioate), 2-oxoglutarate, adipate (hexanedioate), glutarate, and to a lesser extent, pimelate (heptanedioate), 2-oxopimelate (2-oxoheptanedioate), 2-aminoadipate (2-aminohexanedioate), oxaloacetate, and citrate. Plays a central role in catabolism of lysine, hydroxylysine, and tryptophan, by transporting common metabolite intermediates (such as 2-oxoadipate) into the mitochondria, where it is converted into acetyl-CoA and can enter the citric acid (TCA) cycle. This Homo sapiens (Human) protein is Mitochondrial 2-oxodicarboxylate carrier (SLC25A21).